We begin with the raw amino-acid sequence, 247 residues long: ATP synthase subunit a, chloroplastic (247 aa).

Helical transmembrane passes span 38–58 (QVLITSWVVIAILLGSVTLAV), 95–115 (VPFIGTMFLFIFVSNWSGALL), 134–154 (INTTVALALLTSVAYFYAGLS), 199–219 (LVVVVLVSLVPLVVPIPVMFL), and 220–240 (GLFTSGIQALIFATLAAAYIG).

Belongs to the ATPase A chain family. As to quaternary structure, F-type ATPases have 2 components, CF(1) - the catalytic core - and CF(0) - the membrane proton channel. CF(1) has five subunits: alpha(3), beta(3), gamma(1), delta(1), epsilon(1). CF(0) has four main subunits: a, b, b' and c.

Its subcellular location is the plastid. It localises to the chloroplast thylakoid membrane. Key component of the proton channel; it plays a direct role in the translocation of protons across the membrane. The polypeptide is ATP synthase subunit a, chloroplastic (Lemna minor (Common duckweed)).